The following is a 115-amino-acid chain: Ustilagic acid biosynthesis cluster protein orf3 (115 aa).

Residues Met-1–Gln-38 form the signal peptide. A disordered region spans residues Ser-42–Pro-62.

It participates in secondary metabolite biosynthesis. Its function is as follows. Part of the gene cluster that mediates the biosynthesis of the glycolipid biosurfactant ustilagic acid (UA). UA is a secreted cellobiose glycolipid that is toxic for many microorganisms and confers biocontrol activity to U.maydis. UA consists of 15,16-dihydroxypalmitic or 2,15,16-trihydroxypalmitic acid, which is O-glycosidically linked to cellobiose at its terminal hydroxyl group. In addition, the cellobiose moiety is acetylated and acylated with a short-chain hydroxy fatty acid. UA biosynthesis starts with omega-hydroxylation of palmitic acid catalyzed by the cytochrome P450 monooxygenase cyp1. Terminal hydroxylation of palmitic acid precedes subterminal hydroxylation catalyzed by the cytochrome P450 monooxygenase cyp2. Sequential glucosylation of the hydroxy fatty acid is probably catalyzed by the glycosyltransferase ugt1. The cellobiose lipid is further decorated by acetylation of the proximal glucose residue and by acylation with a short-chain beta-hydroxy fatty acid at the distal glucose residue. The acyltransferase uat1 may be a good candidate for catalyzing either acetylation or acylation of the cellobiose lipid. The fatty acid synthase fas2 may be involved in synthesis of the carbon backbone of the short-chain beta-hydroxy fatty acid esterified to the cellobiose disaccharide. The secreted UA consists of a mixture of both alpha-hydroxylated and non-hydroxylated glycolipids; therefore, alpha-hydroxylation of the long-chain fatty, catalyzed by the fatty acid hydroxylase ahd1, occurs late in UA biosynthesis and may be the last step before secretion. The protein is Ustilagic acid biosynthesis cluster protein orf3 of Mycosarcoma maydis (Corn smut fungus).